Reading from the N-terminus, the 1076-residue chain is Enhancer of mRNA-decapping protein 4-like protein pdc1 (1076 aa).

Composition is skewed to low complexity over residues 1-19 and 53-69; these read MNEQDLLNSLRRDLNLPNL and SSLLSLLNAGLNASNQS. Disordered stretches follow at residues 1–82, 95–127, and 139–204; these read MNEQ…ASHS, GAKPSGTASGADVKRSDSESTEATSNERPFNPV, and STGP…AEEQ. Residues 70–82 show a composition bias toward polar residues; the sequence is PSNSGPKYYASHS. Positions 153–173 are enriched in polar residues; it reads NDSQDTAFQSSRNMPSDTSVA. Residues 174–184 show a composition bias toward low complexity; sequence SPDYSHSQSSS. Positions 185–195 are enriched in polar residues; sequence PIANYQESGNS. 2 WD repeats span residues 292–334 and 402–441; these read NSPN…STSE and DTGISAKEYDFSYDGTVFATVDKDALIKIYTVPTTFPSTP. 2 disordered regions span residues 666-714 and 892-934; these read RHST…SPSS and TAPD…PAQG. Over residues 669-688 the composition is skewed to polar residues; it reads TASPSTVNSGFSTPRSQATG. Phosphoserine is present on residues Ser671 and Ser673. Residue Thr674 is modified to Phosphothreonine. Basic and acidic residues predominate over residues 695–706; it reads DKGERFETKDKS. The tract at residues 789–1076 is interaction with dcp2; it reads MQVALKEEIA…ISEISVASSN (288 aa). Ser1075 bears the Phosphoserine mark.

The protein belongs to the WD repeat EDC4 family. In terms of assembly, interacts with dcp2; via C-terminus.

It is found in the cytoplasm. The protein localises to the P-body. Involved in P-body formation. Acts as a functional homolog of human EDC4, which plays a role in mRNA decapping in the process of mRNA degradation. Enhances the decapping activity of dcp2. Together with edc3, acts as a scaffolding protein sufficient for the phase transition of the components of the 5' to 3' mRNA degradation machinery to form P-bodies. Intermolecular interactions between the edc3 Sm domain and at least 10 helical leucine-rich motifs in dcp2 and pdc1 build the core of the interaction network of this spontaneous clustering process. This chain is Enhancer of mRNA-decapping protein 4-like protein pdc1, found in Schizosaccharomyces pombe (strain 972 / ATCC 24843) (Fission yeast).